The following is an 80-amino-acid chain: Small ribosomal subunit protein uS17 (80 aa).

It belongs to the universal ribosomal protein uS17 family. Part of the 30S ribosomal subunit.

Its function is as follows. One of the primary rRNA binding proteins, it binds specifically to the 5'-end of 16S ribosomal RNA. The protein is Small ribosomal subunit protein uS17 of Microcystis aeruginosa (strain NIES-843 / IAM M-2473).